Here is a 599-residue protein sequence, read N- to C-terminus: Subtilisin-like protease 1 (599 aa).

Residues 1-20 form the signal peptide; that stretch reads MRTVFIYACIISLVLRTIPA. A propeptide spans 21–195 (inhibition peptide); the sequence is HNDLMSKEKE…VESDELVGAD (175 aa). An N-linked (GlcNAc...) asparagine glycan is attached at Asn57. Residues 74-101 adopt a coiled-coil conformation; sequence EDAPKEELNKIEMEKKKAEEEAKNSKKK. Asn123, Thr126, Pro128, and Gly183 together coordinate Ca(2+). Residue Asn227 is glycosylated (N-linked (GlcNAc...) asparagine). Position 251 (Asp251) interacts with Ca(2+). The Peptidase S8 domain maps to 257–574; the sequence is QWGLDLARLD…GGYIDILNAV (318 aa). Cystine bridges form between Cys283–Cys393 and Cys372–Cys389. Asp286 serves as the catalytic Charge relay system. Residues Asp295, Glu306, Asp314, Asp315, Asp316, Asn318, Ile320, Asp322, and Asp323 each contribute to the Ca(2+) site. Asn331 carries N-linked (GlcNAc...) asparagine glycosylation. Residue His342 is the Charge relay system of the active site. Ile353 is a Ca(2+) binding site. An N-linked (GlcNAc...) asparagine glycan is attached at Asn355. Ca(2+) contacts are provided by Asn356, Ile358, and Val360. N-linked (GlcNAc...) asparagine glycans are attached at residues Asn402 and Asn434. The cysteines at positions 435 and 448 are disulfide-linked. Ser519 functions as the Charge relay system in the catalytic mechanism.

It belongs to the peptidase S8 family. The N-terminal prodomain is cleaved.

The protein localises to the secreted. The protein resides in the parasitophorous vacuole lumen. It localises to the cytoplasmic vesicle. It is found in the secretory vesicle. The catalysed reaction is Hydrolysis of proteins with broad specificity for peptide bonds, and a preference for a large uncharged residue in P1. Hydrolyzes peptide amides.. Functionally, mediates the proteolytic maturation of serine protease SERA3. Mediates the proteolytic maturation of MSP1, and thereby may prime the parasite cell surface for invasion of fresh erythrocytes. Required for completion of the parasite pre-erythrocytic stages. Required for hepatic schizont development and merozoite formation. Required for the egress of the hepatic merozoites from the parasitophorous vacuole. Required for parasite infectivity during blood stages. Required for male gamete egress. The sequence is that of Subtilisin-like protease 1 from Plasmodium berghei (strain Anka).